The chain runs to 166 residues: Ribosome maturation factor RimM (166 aa).

The PRC barrel domain occupies 91-165 (DDEFYHADLI…RIVADPPEGL (75 aa)).

This sequence belongs to the RimM family. In terms of assembly, binds ribosomal protein uS19.

It is found in the cytoplasm. An accessory protein needed during the final step in the assembly of 30S ribosomal subunit, possibly for assembly of the head region. Essential for efficient processing of 16S rRNA. May be needed both before and after RbfA during the maturation of 16S rRNA. It has affinity for free ribosomal 30S subunits but not for 70S ribosomes. The sequence is that of Ribosome maturation factor RimM from Dinoroseobacter shibae (strain DSM 16493 / NCIMB 14021 / DFL 12).